The following is a 317-amino-acid chain: Transcription factor elt-3 (317 aa).

A disordered region spans residues methionine 1–tyrosine 34. A GATA-type zinc finger spans residues cysteine 244–cysteine 268. The disordered stretch occupies residues lysine 290 to cysteine 317. Over residues threonine 307 to cysteine 317 the composition is skewed to basic residues.

As to quaternary structure, interacts with skn-1; interaction may enhance transcriptional activation of target genes. Expressed in head, trunk and tail. Expression decreases with age in the hypodermal cells and the pharyngeal-intestinal valve cells in the head, eventually showing little or no expression in about 14 day old worms. Expressed in hypodermal, but not in intestinal, cells at 1 day of age. Expression in the hypodermal and intestinal cells in the trunk region decreases quickly between day 3 and day 5 of adulthood. Expression in the tail between days 3 and 14 stays approximately uniform.

The protein resides in the nucleus. Functionally, transcription factor. Required, in concert with signal transducer and transcription factor sta-2, for up-regulation of the vacuolar H(+)-ATPase and acceleration of lysosome maturation at molt. Involved in regulating hypodermal development, perhaps acting downstream of transcription factor elt-1. Modulates environmentally induced changes in collagen gene expression, including rol-6, sqt-1, lon-3, and dpy-13. Involved in regulating expression of various genes, including gst-4, sod-3, ugt-9, and col-144. In response to oxidative stress, required to up-regulate expression of gst-4 mRNA. Regulated by the Insulin/IGF-1-like signaling (IIS) mediated pathway. Plays a role in longevity. May regulate the expression of genes that control sensitivity to osmotic stress, in conjunction with the GATA region-binding transcription factor elt-2. May form a transcriptional circuit with GATA factors egl-18 and elt-6. This Caenorhabditis elegans protein is Transcription factor elt-3.